Here is an 84-residue protein sequence, read N- to C-terminus: Acyl carrier protein (84 aa).

The Carrier domain maps to 4–80 (SETFEKVKKI…EAVDYINNQV (77 aa)). Residue Ser40 is modified to O-(pantetheine 4'-phosphoryl)serine.

The protein belongs to the acyl carrier protein (ACP) family. 4'-phosphopantetheine is transferred from CoA to a specific serine of apo-ACP by AcpS. This modification is essential for activity because fatty acids are bound in thioester linkage to the sulfhydryl of the prosthetic group.

Its subcellular location is the cytoplasm. It participates in lipid metabolism; fatty acid biosynthesis. Carrier of the growing fatty acid chain in fatty acid biosynthesis. The protein is Acyl carrier protein of Nostoc sp. (strain PCC 7120 / SAG 25.82 / UTEX 2576).